Consider the following 548-residue polypeptide: Splicing factor U2af large subunit B (548 aa).

Residues 1–82 show a composition bias toward basic and acidic residues; it reads MADDHAAAAD…DRDRDRDKDR (82 aa). The segment at 1-156 is disordered; that stretch reads MADDHAAAAD…SKRVSGFDMA (156 aa). Over residues 83–93 the composition is skewed to basic residues; it reads DRHHRHHRERR. The span at 94–120 shows a compositional bias: basic and acidic residues; that stretch reads EHRDRSDDHDRHRSRDSERRRDHERDG. Over residues 121–149 the composition is skewed to basic residues; sequence RRRHRSRSRSRSRGRDRRSRSRSRSKSKR. 3 RRM domains span residues 214–297, 334–412, and 453–539; these read RRVY…RPTD, DRIF…RANQ, and QVVS…YPEN.

This sequence belongs to the splicing factor SR family.

It is found in the nucleus. Functionally, necessary for the splicing of pre-mRNA. The chain is Splicing factor U2af large subunit B (U2AF65B) from Oryza sativa subsp. japonica (Rice).